Here is a 350-residue protein sequence, read N- to C-terminus: 3-methylornithine synthase (350 aa).

The Radical SAM core domain occupies 57–279; sequence NRVFLNCFIY…PKCLIPASLD (223 aa). Positions 71 and 75 each coordinate [4Fe-4S] cluster. F77 contributes to the S-adenosyl-L-methionine binding site. Position 78 (C78) interacts with [4Fe-4S] cluster. The (3R)-3-methyl-D-ornithine site is built by D112, S146, and Y169. Residues E171, R182, and R190 each coordinate S-adenosyl-L-methionine. A (3R)-3-methyl-D-ornithine-binding site is contributed by R235. S-adenosyl-L-methionine is bound by residues L240 and Q242. The (3R)-3-methyl-D-ornithine site is built by S277, T298, and S299.

This sequence belongs to the radical SAM superfamily. PylB family. [4Fe-4S] cluster is required as a cofactor. S-adenosyl-L-methionine serves as cofactor.

The catalysed reaction is L-lysine = (3R)-3-methyl-D-ornithine. It functions in the pathway amino-acid biosynthesis; L-pyrrolysine biosynthesis. Functionally, catalyzes the isomerization of L-lysine to (3R)-3-methyl-D-ornithine via a radical-based mechanism. Is required for the biosynthesis of pyrrolysine. This is 3-methylornithine synthase (pylB) from Methanosarcina acetivorans (strain ATCC 35395 / DSM 2834 / JCM 12185 / C2A).